Reading from the N-terminus, the 171-residue chain is 2-C-methyl-D-erythritol 2,4-cyclodiphosphate synthase (171 aa).

A divalent metal cation is bound by residues aspartate 8 and histidine 10. 4-CDP-2-C-methyl-D-erythritol 2-phosphate contacts are provided by residues 8-10 (DVH) and 34-35 (HS). Histidine 42 contacts a divalent metal cation. 4-CDP-2-C-methyl-D-erythritol 2-phosphate is bound by residues 56 to 58 (DIG), 61 to 65 (FPDTD), 132 to 135 (TTTE), phenylalanine 139, and arginine 142.

This sequence belongs to the IspF family. As to quaternary structure, homotrimer. It depends on a divalent metal cation as a cofactor.

It catalyses the reaction 4-CDP-2-C-methyl-D-erythritol 2-phosphate = 2-C-methyl-D-erythritol 2,4-cyclic diphosphate + CMP. Its pathway is isoprenoid biosynthesis; isopentenyl diphosphate biosynthesis via DXP pathway; isopentenyl diphosphate from 1-deoxy-D-xylulose 5-phosphate: step 4/6. Functionally, involved in the biosynthesis of isopentenyl diphosphate (IPP) and dimethylallyl diphosphate (DMAPP), two major building blocks of isoprenoid compounds. Catalyzes the conversion of 4-diphosphocytidyl-2-C-methyl-D-erythritol 2-phosphate (CDP-ME2P) to 2-C-methyl-D-erythritol 2,4-cyclodiphosphate (ME-CPP) with a corresponding release of cytidine 5-monophosphate (CMP). The protein is 2-C-methyl-D-erythritol 2,4-cyclodiphosphate synthase of Geotalea daltonii (strain DSM 22248 / JCM 15807 / FRC-32) (Geobacter daltonii).